We begin with the raw amino-acid sequence, 374 residues long: Alanine racemase (374 aa).

K34 serves as the catalytic Proton acceptor; specific for D-alanine. K34 is modified (N6-(pyridoxal phosphate)lysine). R147 contributes to the substrate binding site. Y271 serves as the catalytic Proton acceptor; specific for L-alanine. M319 serves as a coordination point for substrate.

It belongs to the alanine racemase family. It depends on pyridoxal 5'-phosphate as a cofactor.

The enzyme catalyses L-alanine = D-alanine. It functions in the pathway amino-acid biosynthesis; D-alanine biosynthesis; D-alanine from L-alanine: step 1/1. Functionally, catalyzes the interconversion of L-alanine and D-alanine. May also act on other amino acids. The sequence is that of Alanine racemase (alr) from Haemophilus ducreyi (strain 35000HP / ATCC 700724).